A 377-amino-acid polypeptide reads, in one-letter code: Ejaculatory bulb-specific protein 1 (377 aa).

The N-terminal stretch at M1–A20 is a signal peptide. The interval P155 to G253 is disordered. Residues G165 to P228 show a composition bias toward pro residues.

As to expression, specifically expressed in the ejaculatory bulb and seminal fluid. Detected in mated females 3 minutes after the start of mating, and for at least 3 hours after the start of mating.

Its subcellular location is the secreted. Functionally, major protein component of the posterior mating plug. Accessory gland proteins constitute, or are required for formation of the anterior mating plug. Posterior mating plug forms before sperm transfer and the anterior mating plug is formed after the start of mating. This is Ejaculatory bulb-specific protein 1 from Drosophila melanogaster (Fruit fly).